A 160-amino-acid polypeptide reads, in one-letter code: Cytochrome b6-f complex subunit 4 (160 aa).

The next 3 membrane-spanning stretches (helical) occupy residues 36-56 (LLYI…GLAV), 95-115 (LLGI…PFIE), and 131-151 (SLFL…CLPI).

Belongs to the cytochrome b family. PetD subfamily. The 4 large subunits of the cytochrome b6-f complex are cytochrome b6, subunit IV (17 kDa polypeptide, PetD), cytochrome f and the Rieske protein, while the 4 small subunits are PetG, PetL, PetM and PetN. The complex functions as a dimer.

It is found in the cellular thylakoid membrane. Its function is as follows. Component of the cytochrome b6-f complex, which mediates electron transfer between photosystem II (PSII) and photosystem I (PSI), cyclic electron flow around PSI, and state transitions. The protein is Cytochrome b6-f complex subunit 4 of Prochlorococcus marinus (strain NATL2A).